Consider the following 102-residue polypeptide: Large ribosomal subunit protein eL30 (102 aa).

It belongs to the eukaryotic ribosomal protein eL30 family. As to quaternary structure, part of the 50S ribosomal subunit.

The chain is Large ribosomal subunit protein eL30 from Thermococcus kodakarensis (strain ATCC BAA-918 / JCM 12380 / KOD1) (Pyrococcus kodakaraensis (strain KOD1)).